The primary structure comprises 385 residues: Chaperone protein DnaJ (385 aa).

The region spanning aspartate 5–glycine 72 is the J domain. Positions arginine 26 to lysine 48 are disordered. A compositionally biased stretch (basic and acidic residues) spans aspartate 35 to lysine 48. The segment at glycine 145 to glutamine 223 adopts a CR-type zinc-finger fold. 8 residues coordinate Zn(2+): cysteine 158, cysteine 161, cysteine 175, cysteine 178, cysteine 197, cysteine 200, cysteine 211, and cysteine 214. CXXCXGXG motif repeat units follow at residues cysteine 158–glycine 165, cysteine 175–glycine 182, cysteine 197–glycine 204, and cysteine 211–glycine 218. The disordered stretch occupies residues phenylalanine 362–lysine 385.

Belongs to the DnaJ family. As to quaternary structure, homodimer. Zn(2+) serves as cofactor.

The protein localises to the cytoplasm. Its function is as follows. Participates actively in the response to hyperosmotic and heat shock by preventing the aggregation of stress-denatured proteins and by disaggregating proteins, also in an autonomous, DnaK-independent fashion. Unfolded proteins bind initially to DnaJ; upon interaction with the DnaJ-bound protein, DnaK hydrolyzes its bound ATP, resulting in the formation of a stable complex. GrpE releases ADP from DnaK; ATP binding to DnaK triggers the release of the substrate protein, thus completing the reaction cycle. Several rounds of ATP-dependent interactions between DnaJ, DnaK and GrpE are required for fully efficient folding. Also involved, together with DnaK and GrpE, in the DNA replication of plasmids through activation of initiation proteins. The polypeptide is Chaperone protein DnaJ (Leptothrix cholodnii (strain ATCC 51168 / LMG 8142 / SP-6) (Leptothrix discophora (strain SP-6))).